We begin with the raw amino-acid sequence, 184 residues long: Large ribosomal subunit protein uL6 (184 aa).

It belongs to the universal ribosomal protein uL6 family. As to quaternary structure, part of the 50S ribosomal subunit.

This protein binds to the 23S rRNA, and is important in its secondary structure. It is located near the subunit interface in the base of the L7/L12 stalk, and near the tRNA binding site of the peptidyltransferase center. This chain is Large ribosomal subunit protein uL6, found in Aster yellows witches'-broom phytoplasma (strain AYWB).